We begin with the raw amino-acid sequence, 253 residues long: Trans-aconitate 2-methyltransferase (253 aa).

This sequence belongs to the methyltransferase superfamily. Tam family.

Its subcellular location is the cytoplasm. It carries out the reaction trans-aconitate + S-adenosyl-L-methionine = (E)-3-(methoxycarbonyl)pent-2-enedioate + S-adenosyl-L-homocysteine. In terms of biological role, catalyzes the S-adenosylmethionine monomethyl esterification of trans-aconitate. The sequence is that of Trans-aconitate 2-methyltransferase from Azoarcus sp. (strain BH72).